The following is a 119-amino-acid chain: MARVKSGKVTRRRHKKILKLAKGYWGAKSKLFRVANQAVMKSLMYAYIGRKLRKRDFRRLWITRINAAARAYGISYSRFINGLKKAGIEINRKMLSEMAIHDEKAFAELVNIAKQQLNA.

The protein belongs to the bacterial ribosomal protein bL20 family.

Its function is as follows. Binds directly to 23S ribosomal RNA and is necessary for the in vitro assembly process of the 50S ribosomal subunit. It is not involved in the protein synthesizing functions of that subunit. In Caldanaerobacter subterraneus subsp. tengcongensis (strain DSM 15242 / JCM 11007 / NBRC 100824 / MB4) (Thermoanaerobacter tengcongensis), this protein is Large ribosomal subunit protein bL20.